The sequence spans 103 residues: Small ribosomal subunit protein uS10 (103 aa).

Belongs to the universal ribosomal protein uS10 family. In terms of assembly, part of the 30S ribosomal subunit.

Functionally, involved in the binding of tRNA to the ribosomes. This is Small ribosomal subunit protein uS10 from Chlorobaculum parvum (strain DSM 263 / NCIMB 8327) (Chlorobium vibrioforme subsp. thiosulfatophilum).